The primary structure comprises 332 residues: Biotin synthase (332 aa).

One can recognise a Radical SAM core domain in the interval 53-282 (HFGKKVKLNM…TKEIRISGGR (230 aa)). The [4Fe-4S] cluster site is built by Cys71, Cys75, and Cys78. [2Fe-2S] cluster contacts are provided by Cys115, Cys147, Cys207, and Arg277.

The protein belongs to the radical SAM superfamily. Biotin synthase family. Homodimer. It depends on [4Fe-4S] cluster as a cofactor. The cofactor is [2Fe-2S] cluster.

The enzyme catalyses (4R,5S)-dethiobiotin + (sulfur carrier)-SH + 2 reduced [2Fe-2S]-[ferredoxin] + 2 S-adenosyl-L-methionine = (sulfur carrier)-H + biotin + 2 5'-deoxyadenosine + 2 L-methionine + 2 oxidized [2Fe-2S]-[ferredoxin]. Its pathway is cofactor biosynthesis; biotin biosynthesis; biotin from 7,8-diaminononanoate: step 2/2. In terms of biological role, catalyzes the conversion of dethiobiotin (DTB) to biotin by the insertion of a sulfur atom into dethiobiotin via a radical-based mechanism. The polypeptide is Biotin synthase (Bacillus mycoides (strain KBAB4) (Bacillus weihenstephanensis)).